Reading from the N-terminus, the 235-residue chain is Sugar fermentation stimulation protein homolog (235 aa).

This sequence belongs to the SfsA family.

This is Sugar fermentation stimulation protein homolog from Ectopseudomonas mendocina (strain ymp) (Pseudomonas mendocina).